Reading from the N-terminus, the 428-residue chain is Tol-Pal system protein TolB (428 aa).

The N-terminal stretch at 1–23 (MRRLYQTVCTLALLLVGLQAAHA) is a signal peptide.

This sequence belongs to the TolB family. As to quaternary structure, the Tol-Pal system is composed of five core proteins: the inner membrane proteins TolA, TolQ and TolR, the periplasmic protein TolB and the outer membrane protein Pal. They form a network linking the inner and outer membranes and the peptidoglycan layer.

The protein localises to the periplasm. Its function is as follows. Part of the Tol-Pal system, which plays a role in outer membrane invagination during cell division and is important for maintaining outer membrane integrity. The sequence is that of Tol-Pal system protein TolB from Alkalilimnicola ehrlichii (strain ATCC BAA-1101 / DSM 17681 / MLHE-1).